Consider the following 157-residue polypeptide: Glutathione peroxidase homolog BsaA (157 aa).

Residue Cys-35 is part of the active site.

This sequence belongs to the glutathione peroxidase family.

This is Glutathione peroxidase homolog BsaA (bsaA) from Halalkalibacterium halodurans (strain ATCC BAA-125 / DSM 18197 / FERM 7344 / JCM 9153 / C-125) (Bacillus halodurans).